The sequence spans 416 residues: Ribulose bisphosphate carboxylase large chain (416 aa).

Substrate contacts are provided by Asn-102 and Thr-152. Lys-154 acts as the Proton acceptor in catalysis. Lys-156 is a binding site for substrate. The Mg(2+) site is built by Lys-180, Asp-182, and Glu-183. Lys-180 bears the N6-carboxylysine mark. The Proton acceptor role is filled by His-273. Residues Arg-274, His-306, and Ser-358 each contribute to the substrate site.

The protein belongs to the RuBisCO large chain family. Type I subfamily. Heterohexadecamer of 8 large chains and 8 small chains; disulfide-linked. The disulfide link is formed within the large subunit homodimers. The cofactor is Mg(2+). Post-translationally, the disulfide bond which can form in the large chain dimeric partners within the hexadecamer appears to be associated with oxidative stress and protein turnover.

The protein resides in the plastid. It localises to the chloroplast. The catalysed reaction is 2 (2R)-3-phosphoglycerate + 2 H(+) = D-ribulose 1,5-bisphosphate + CO2 + H2O. It carries out the reaction D-ribulose 1,5-bisphosphate + O2 = 2-phosphoglycolate + (2R)-3-phosphoglycerate + 2 H(+). RuBisCO catalyzes two reactions: the carboxylation of D-ribulose 1,5-bisphosphate, the primary event in carbon dioxide fixation, as well as the oxidative fragmentation of the pentose substrate in the photorespiration process. Both reactions occur simultaneously and in competition at the same active site. In Arthropteris beckleri (Fern), this protein is Ribulose bisphosphate carboxylase large chain (rbcL).